Here is a 173-residue protein sequence, read N- to C-terminus: Bifunctional protein PyrR (173 aa).

Residues 93–105 (VILIDDVLYTGRT) carry the PRPP-binding motif.

The protein belongs to the purine/pyrimidine phosphoribosyltransferase family. PyrR subfamily. As to quaternary structure, homodimer and homohexamer; in equilibrium.

The catalysed reaction is UMP + diphosphate = 5-phospho-alpha-D-ribose 1-diphosphate + uracil. Regulates transcriptional attenuation of the pyrimidine nucleotide (pyr) operon by binding in a uridine-dependent manner to specific sites on pyr mRNA. This disrupts an antiterminator hairpin in the RNA and favors formation of a downstream transcription terminator, leading to a reduced expression of downstream genes. In terms of biological role, also displays a weak uracil phosphoribosyltransferase activity which is not physiologically significant. This is Bifunctional protein PyrR from Streptococcus pyogenes serotype M49 (strain NZ131).